A 652-amino-acid chain; its full sequence is MSVTESKAKTERKSSRKPAKTQETVLSALLAQTEEVSVPLASLIKSPLNVRTVPYSAESVSELADSIKGVGLLQNLVVHALPGDRYGVAAGGRRLAALNMLAERDIIQVDWPVRVKVIPQELATAASMTENGHRRDMHPAEQIAGFRAMAQEGKTPAQIGDLLGYSPRHVQRMLKLADLAPVILDALAEDRITTEHCQALALENDTARQVQVFEAACQSGWGGKPDVRVIRNLITESEVAVKDNTKFRFVGADAFSPDELRTDLFSDDEGGYVDCVALDAALLEKLQAVAEHLREAEGWEWCAGRMEPVGECREDSRAYRNLPEPEAVLTEAEEERLNELMMRYDALENQCEESDLLAAEMKLIDCMAKVRAWTPEMRAGSGVVVSWRYGNVCVQRGVQLRSEDDVTDDADRTEQVQEKASVEEISLPLLTKMSSERTLAVQAALMQQPDKSLALLTWTLCLNVFGSGAYSKPAQISLECKHYSLTSDAPSGKEGAAFMALMAEKARLVVLLPEGWSRDMTTFLSLSQEVLLSLLSFCTACSIHGVQTRECGHTSRSPLDPLETAIGFHMRDWWQPTKANFFGHLKKPQIIAALNEAGLSGAARDAEKMKKGDAAEHAEFHMKDNRWVPGWMCAPRPQTDATERTDNLADAA.

Residues 1 to 13 (MSVTESKAKTERK) are compositionally biased toward basic and acidic residues. Residues 1-21 (MSVTESKAKTERKSSRKPAKT) form a disordered region.

The protein belongs to the ParB family.

This is an uncharacterized protein from Escherichia coli (strain K12).